The sequence spans 213 residues: Kynurenine formamidase (213 aa).

Trp-18 contributes to the substrate binding site. Positions 48, 52, and 54 each coordinate Zn(2+). His-58 serves as the catalytic Proton donor/acceptor. The Zn(2+) site is built by His-160 and Glu-172.

The protein belongs to the Cyclase 1 superfamily. KynB family. As to quaternary structure, homodimer. The cofactor is Zn(2+).

It carries out the reaction N-formyl-L-kynurenine + H2O = L-kynurenine + formate + H(+). It functions in the pathway amino-acid degradation; L-tryptophan degradation via kynurenine pathway; L-kynurenine from L-tryptophan: step 2/2. Catalyzes the hydrolysis of N-formyl-L-kynurenine to L-kynurenine, the second step in the kynurenine pathway of tryptophan degradation. The sequence is that of Kynurenine formamidase from Burkholderia pseudomallei (strain 668).